The following is an 822-amino-acid chain: Lysine-specific histone demethylase 2 (822 aa).

The span at 1–11 (MATPRGRTKKK) shows a compositional bias: basic residues. The segment at 1-47 (MATPRGRTKKKASFDHSPDSLPLRSSGRQAKKKATETTDEDEDGGSE) is disordered. Phosphoserine is present on residues serine 13, serine 17, and serine 26. Residues cysteine 53, cysteine 58, cysteine 65, cysteine 73, histidine 84, histidine 90, cysteine 92, cysteine 95, cysteine 142, cysteine 147, cysteine 169, and cysteine 185 each coordinate Zn(2+). Residues 133–193 (DQQLPYWVQC…HCSLPEDLRV (61 aa)) form a CW-type zinc finger. Phosphoserine is present on serine 247. The GLYR1-binding stretch occupies residues 273 to 292 (YQPNECGKALCVRPDVMELD). One can recognise an SWIRM domain in the interval 275-373 (PNECGKALCV…TGVLSVGADQ (99 aa)). Residue 383-439 (KSVIIIGAGPAGLAAARQLHNFGIKVTVLEAKDRIGGRVWDDKSFKGVTVGRGAQIV) coordinates FAD. Histone H3-binding stretches follow at residues 438-467 (IVNGCINNPVALMCEQLGISMHKFGERCDL), 487-498 (FNALLDVVSEWR), and 538-572 (FHLSNLEYACGSNLHQVSARSWDHNEFFAQFAGDH). Positions 564-566 (FFA) are GLYR1-binding. FAD contacts are provided by residues valine 598, glutamate 795, and 803-805 (QTV). Residues 798–814 (NRHFPQTVTGAYLSGVR) form a GLYR1-binding region.

Belongs to the flavin monoamine oxidase family. In terms of assembly, interacts with its cofactor GLYR1 at nucleosomes; this interaction stimulates H3K4me1 and H3K4me2 demethylation. In contrast to KDM1A, does not form a complex with RCOR1/CoREST. Possible accessory component of the polycomb repressive deubiquitinase (PR-DUB) complex, at least composed of BAP1, one of ASXL1, ASXL2 or (probably) ASXL3 and one of MBD5 or MBD6. The PR-DUB core associates with a number of accessory proteins, including FOXK1, FOXK2, KDM1B, HCFC1 and OGT; KDM1B specifically associates with ASXL2 PR-DUB complexes. FAD is required as a cofactor. The cofactor is Zn(2+).

The protein resides in the nucleus. It is found in the chromosome. The enzyme catalyses N(6),N(6)-dimethyl-L-lysyl(4)-[histone H3] + 2 A + 2 H2O = L-lysyl(4)-[histone H3] + 2 formaldehyde + 2 AH2. It carries out the reaction N(6)-methyl-L-lysyl(4)-[histone H3] + A + H2O = L-lysyl(4)-[histone H3] + formaldehyde + AH2. Its activity is regulated as follows. Histone H3K4me1 and H3K4me2 demethylase activity is inhibited by DNA, this inhibition is released in complex with GLYR1. In terms of biological role, histone demethylase that demethylates 'Lys-4' of histone H3, a specific tag for epigenetic transcriptional activation, thereby acting as a corepressor. Required for de novo DNA methylation of a subset of imprinted genes during oogenesis. Acts by oxidizing the substrate by FAD to generate the corresponding imine that is subsequently hydrolyzed. Demethylates both mono- and di-methylated 'Lys-4' of histone H3. Has no effect on tri-methylated 'Lys-4', mono-, di- or tri-methylated 'Lys-9', mono-, di- or tri-methylated 'Lys-27', mono-, di- or tri-methylated 'Lys-36' of histone H3, or on mono-, di- or tri-methylated 'Lys-20' of histone H4. Alone, it is unable to demethylate H3K4me on nucleosomes and requires the presence of GLYR1 to achieve such activity, they form a multifunctional enzyme complex that modifies transcribed chromatin and facilitates Pol II transcription through nucleosomes. This is Lysine-specific histone demethylase 2 from Homo sapiens (Human).